The primary structure comprises 208 residues: Small ribosomal subunit protein uS4 (208 aa).

One can recognise an S4 RNA-binding domain in the interval 97-158 (TRLDNVIYRM…RAQKYLCVQE (62 aa)).

This sequence belongs to the universal ribosomal protein uS4 family. Part of the 30S ribosomal subunit. Contacts protein S5. The interaction surface between S4 and S5 is involved in control of translational fidelity.

In terms of biological role, one of the primary rRNA binding proteins, it binds directly to 16S rRNA where it nucleates assembly of the body of the 30S subunit. With S5 and S12 plays an important role in translational accuracy. The sequence is that of Small ribosomal subunit protein uS4 from Xylella fastidiosa (strain 9a5c).